Here is a 216-residue protein sequence, read N- to C-terminus: Uracil phosphoribosyltransferase (216 aa).

5-phospho-alpha-D-ribose 1-diphosphate-binding positions include R85, R110, and 135-143 (DPMVATGYS). Residues I200 and 205–207 (GDA) each bind uracil. A 5-phospho-alpha-D-ribose 1-diphosphate-binding site is contributed by D206.

This sequence belongs to the UPRTase family. It depends on Mg(2+) as a cofactor.

It catalyses the reaction UMP + diphosphate = 5-phospho-alpha-D-ribose 1-diphosphate + uracil. Its pathway is pyrimidine metabolism; UMP biosynthesis via salvage pathway; UMP from uracil: step 1/1. Allosterically activated by GTP. Catalyzes the conversion of uracil and 5-phospho-alpha-D-ribose 1-diphosphate (PRPP) to UMP and diphosphate. The chain is Uracil phosphoribosyltransferase from Burkholderia vietnamiensis (strain G4 / LMG 22486) (Burkholderia cepacia (strain R1808)).